The following is a 134-amino-acid chain: Probable glycine cleavage system H protein (134 aa).

Residues 29–110 (TVLVGISDYA…PYENWIAKLK (82 aa)) enclose the Lipoyl-binding domain. N6-lipoyllysine is present on K70.

The protein belongs to the GcvH family. The glycine cleavage system is composed of four proteins: P, T, L and H. The cofactor is (R)-lipoate.

Functionally, the glycine cleavage system catalyzes the degradation of glycine. The H protein shuttles the methylamine group of glycine from the P protein to the T protein. This Thermococcus kodakarensis (strain ATCC BAA-918 / JCM 12380 / KOD1) (Pyrococcus kodakaraensis (strain KOD1)) protein is Probable glycine cleavage system H protein.